A 347-amino-acid chain; its full sequence is Endothelin receptor type B (347 aa).

The Extracellular portion of the chain corresponds to 1-7 (EIKETFK). A helical transmembrane segment spans residues 8–32 (YINTVVSCLVFVLGIIGNSTLLRII). The Cytoplasmic segment spans residues 33–43 (YKNKCMRNGPN). A helical membrane pass occupies residues 44–69 (ILIASLALGDLLHIIIDIPISVYKLL). Residues 70–81 (AEDWPFGVEMCK) lie on the Extracellular side of the membrane. The cysteines at positions 80 and 161 are disulfide-linked. The chain crosses the membrane as a helical span at residues 82-103 (LVPFIQKASVGITVLSLCALSI). The Cytoplasmic portion of the chain corresponds to 104 to 124 (DRYRAVASWSRIKGIGVPKWT). Residues 125-149 (AVEIVLIWVISVVLAVPEAIAFDMI) form a helical membrane-spanning segment. The Extracellular segment spans residues 150–177 (TMEYRGKDLRICLLHPTQKTSFMMFYKQ). Residues 178–202 (AKDWWLFSFYFCLPLAITALFYTLM) traverse the membrane as a helical segment. Residues 203-230 (TCEMLRKKSGMQIALNDHLKQRREVAKT) lie on the Cytoplasmic side of the membrane. Residues 231–256 (VFCLVLVFALCWLPLHLSRILKLTIY) traverse the membrane as a helical segment. Residues 257–268 (DQKDPNRCELLS) lie on the Extracellular side of the membrane. A helical transmembrane segment spans residues 269–295 (FFLVMDYIGINMASLNSCINPIALYLV). Topologically, residues 296-347 (SKRFQNCFKSCLCCWCQSKDLLSLEERQSCLKFKANDHGYDNFRSSNKYSSS) are cytoplasmic. 2 S-palmitoyl cysteine lipidation sites follow: Cys309 and Cys311.

It belongs to the G-protein coupled receptor 1 family. Endothelin receptor subfamily. EDNRB sub-subfamily.

The protein localises to the cell membrane. In terms of biological role, non-specific receptor for endothelin 1, 2, and 3. Mediates its action by association with G proteins that activate a phosphatidylinositol-calcium second messenger system. This Coturnix japonica (Japanese quail) protein is Endothelin receptor type B (EDNRB).